We begin with the raw amino-acid sequence, 74 residues long: CLAVATA3/ESR (CLE)-related protein 1 (74 aa).

A signal peptide spans 1–22 (MANLKFLLCLFLICVSLSRSSA). N-linked (GlcNAc...) asparagine glycosylation is present at N59. Hydroxyproline occurs at positions 66 and 69. P69 carries an O-linked (Ara...) hydroxyproline glycan.

The protein belongs to the CLV3/ESR signal peptide family. Post-translationally, the O-glycosylation (arabinosylation) of the hydroxyproline Pro-69 enhances binding affinity of the CLE1p peptide for its receptor. Mostly expressed in roots and seedlings, and, to a lower extent, in stems and apex.

It is found in the secreted. It localises to the extracellular space. In terms of biological role, extracellular signal peptide that regulates cell fate. The protein is CLAVATA3/ESR (CLE)-related protein 1 of Arabidopsis thaliana (Mouse-ear cress).